We begin with the raw amino-acid sequence, 202 residues long: Holliday junction branch migration complex subunit RuvA (202 aa).

The tract at residues 1-65 (MIAYVEGRLA…EDALELYGFA (65 aa)) is domain I. Residues 66–144 (TWDERQTFIV…VEDLPAAAPL (79 aa)) are domain II. Positions 145 to 155 (VTGGAPGGVFR) are flexible linker. The interval 155–202 (RDALAGLANLGYGEEEASHVLKDVLHGEPDLDVGGALRAALRALARGR) is domain III.

This sequence belongs to the RuvA family. In terms of assembly, homotetramer. Forms an RuvA(8)-RuvB(12)-Holliday junction (HJ) complex. HJ DNA is sandwiched between 2 RuvA tetramers; dsDNA enters through RuvA and exits via RuvB. An RuvB hexamer assembles on each DNA strand where it exits the tetramer. Each RuvB hexamer is contacted by two RuvA subunits (via domain III) on 2 adjacent RuvB subunits; this complex drives branch migration. In the full resolvosome a probable DNA-RuvA(4)-RuvB(12)-RuvC(2) complex forms which resolves the HJ.

It is found in the cytoplasm. The RuvA-RuvB-RuvC complex processes Holliday junction (HJ) DNA during genetic recombination and DNA repair, while the RuvA-RuvB complex plays an important role in the rescue of blocked DNA replication forks via replication fork reversal (RFR). RuvA specifically binds to HJ cruciform DNA, conferring on it an open structure. The RuvB hexamer acts as an ATP-dependent pump, pulling dsDNA into and through the RuvAB complex. HJ branch migration allows RuvC to scan DNA until it finds its consensus sequence, where it cleaves and resolves the cruciform DNA. This Nitratidesulfovibrio vulgaris (strain ATCC 29579 / DSM 644 / CCUG 34227 / NCIMB 8303 / VKM B-1760 / Hildenborough) (Desulfovibrio vulgaris) protein is Holliday junction branch migration complex subunit RuvA.